The sequence spans 151 residues: FUN14 domain-containing protein 1A (151 aa).

The YXXL motif lies at 14 to 17 (YEVL). Transmembrane regions (helical) follow at residues 44–64 (YSVATQIVIGGVSGWCAGFLF), 71–91 (AATAVGGGFLLLQIASHGGYI), and 130–150 (FVKKNIVVSGGFVGGFLLGLA).

It belongs to the FUN14 family.

The protein resides in the mitochondrion outer membrane. Functionally, acts as an activator of hypoxia-induced mitophagy, an important mechanism for mitochondrial quality control. The polypeptide is FUN14 domain-containing protein 1A (fundc1-a) (Xenopus laevis (African clawed frog)).